The chain runs to 122 residues: Large ribosomal subunit protein uL14 (122 aa).

This sequence belongs to the universal ribosomal protein uL14 family. As to quaternary structure, part of the 50S ribosomal subunit. Forms a cluster with proteins L3 and L19. In the 70S ribosome, L14 and L19 interact and together make contacts with the 16S rRNA in bridges B5 and B8.

In terms of biological role, binds to 23S rRNA. Forms part of two intersubunit bridges in the 70S ribosome. The sequence is that of Large ribosomal subunit protein uL14 from Geotalea daltonii (strain DSM 22248 / JCM 15807 / FRC-32) (Geobacter daltonii).